The primary structure comprises 491 residues: Myocilin (491 aa).

Positions 1 to 18 (MPAVQLLLLACPVWDVGA) are cleaved as a signal peptide. Residue asparagine 43 is glycosylated (N-linked (GlcNAc...) asparagine). Positions 98 to 171 (QETPEGLQRE…QEVARLRRGQ (74 aa)) form a coiled coil. Residues 151–189 (ENLARRLESSSQEVARLRRGQCPQTRDTARDVPPGSREV) form a disordered region. Residues 231–490 (GCGELVWVGE…MVTYDIKLSK (260 aa)) form the Olfactomedin-like domain. An intrachain disulfide couples cysteine 232 to cysteine 420. Residues aspartate 367, asparagine 415, alanine 416, isoleucine 464, and aspartate 465 each coordinate Ca(2+).

In terms of assembly, homodimer (via N-terminus). Can also form higher oligomers. Interacts with OLFM3, FN1, NRCAM, GLDN and NFASC. Interacts (via N-terminus) with MYL2. Interacts with SFRP1, FRZB, FZD7, FZD10, FZD1 and WIF1; regulates Wnt signaling. Interacts with SNTA1; regulates muscle hypertrophy. Interacts with ERBB2 and ERBB3; activates ERBB2-ERBB3 signaling pathway. Interacts with SNCG; affects its secretion and its aggregation. Post-translationally, palmitoylated. Undergoes a calcium-dependent proteolytic cleavage at Arg-213 by CAPN2 in the endoplasmic reticulum. The result is the production of two fragments, one of 35 kDa containing the C-terminal olfactomedin-like domain, and another of 20 kDa containing the N-terminal leucine zipper-like domain. In terms of processing, glycosylated.

The protein localises to the secreted. It is found in the golgi apparatus. The protein resides in the cytoplasmic vesicle. It localises to the extracellular space. Its subcellular location is the extracellular matrix. The protein localises to the extracellular exosome. It is found in the mitochondrion. The protein resides in the mitochondrion intermembrane space. It localises to the mitochondrion inner membrane. Its subcellular location is the mitochondrion outer membrane. The protein localises to the rough endoplasmic reticulum. It is found in the cell projection. The protein resides in the cilium. It localises to the endoplasmic reticulum. In terms of biological role, secreted glycoprotein regulating the activation of different signaling pathways in adjacent cells to control different processes including cell adhesion, cell-matrix adhesion, cytoskeleton organization and cell migration. Promotes substrate adhesion, spreading and formation of focal contacts. Negatively regulates cell-matrix adhesion and stress fiber assembly through Rho protein signal transduction. Modulates the organization of actin cytoskeleton by stimulating the formation of stress fibers through interactions with components of Wnt signaling pathways. Promotes cell migration through activation of PTK2 and the downstream phosphatidylinositol 3-kinase signaling. Plays a role in bone formation and promotes osteoblast differentiation in a dose-dependent manner through mitogen-activated protein kinase signaling. Mediates myelination in the peripheral nervous system through ERBB2/ERBB3 signaling. Plays a role as a regulator of muscle hypertrophy through the components of dystrophin-associated protein complex. Involved in positive regulation of mitochondrial depolarization. Plays a role in neurite outgrowth. May participate in the obstruction of fluid outflow in the trabecular meshwork. This chain is Myocilin (MYOC), found in Macaca fascicularis (Crab-eating macaque).